A 644-amino-acid chain; its full sequence is Methionine--tRNA ligase (644 aa).

The 'HIGH' region motif lies at 14–24 (YYPSAKLHIGN). Positions 129, 132, 146, and 149 each coordinate Zn(2+). The short motif at 299–303 (KMSKS) is the 'KMSKS' region element. Lys-302 lines the ATP pocket. In terms of domain architecture, tRNA-binding spans 542-644 (DVDKLDLRVV…EDIPTGSIVR (103 aa)).

This sequence belongs to the class-I aminoacyl-tRNA synthetase family. MetG type 2A subfamily. As to quaternary structure, homodimer. The cofactor is Zn(2+).

The protein resides in the cytoplasm. The catalysed reaction is tRNA(Met) + L-methionine + ATP = L-methionyl-tRNA(Met) + AMP + diphosphate. Its function is as follows. Is required not only for elongation of protein synthesis but also for the initiation of all mRNA translation through initiator tRNA(fMet) aminoacylation. The polypeptide is Methionine--tRNA ligase (metG) (Clostridium acetobutylicum (strain ATCC 824 / DSM 792 / JCM 1419 / IAM 19013 / LMG 5710 / NBRC 13948 / NRRL B-527 / VKM B-1787 / 2291 / W)).